The primary structure comprises 478 residues: Cysteine protease ATG4B (478 aa).

Polar residues predominate over residues 1–15; that stretch reads MTSLPDRGVSSSSSD. A disordered region spans residues 1-31; that stretch reads MTSLPDRGVSSSSSDPLCEGNIAPCSSSSEQ. The Nucleophile role is filled by cysteine 164. Active-site residues include aspartate 361 and histidine 363.

Belongs to the peptidase C54 family. As to quaternary structure, interacts with ATG8.

It localises to the cytoplasm. It carries out the reaction [protein]-C-terminal L-amino acid-glycyl-phosphatidylethanolamide + H2O = [protein]-C-terminal L-amino acid-glycine + a 1,2-diacyl-sn-glycero-3-phosphoethanolamine. Its function is as follows. Cysteine protease that plays a key role in autophagy by mediating both proteolytic activation and delipidation of ATG8 family proteins. The protease activity is required for proteolytic activation of ATG8 family proteins: cleaves the C-terminal amino acid of ATG8 proteins to reveal a C-terminal glycine. Exposure of the glycine at the C-terminus is essential for ATG8 proteins conjugation to phosphatidylethanolamine (PE) and insertion to membranes, which is necessary for autophagy. In addition to the protease activity, also mediates delipidation of PE-conjugated ATG8 proteins. The chain is Cysteine protease ATG4B (ATG4B) from Oryza sativa subsp. japonica (Rice).